The following is a 280-amino-acid chain: Bis(5'-nucleosyl)-tetraphosphatase, symmetrical (280 aa).

The protein belongs to the Ap4A hydrolase family.

The catalysed reaction is P(1),P(4)-bis(5'-adenosyl) tetraphosphate + H2O = 2 ADP + 2 H(+). Its function is as follows. Hydrolyzes diadenosine 5',5'''-P1,P4-tetraphosphate to yield ADP. The sequence is that of Bis(5'-nucleosyl)-tetraphosphatase, symmetrical from Escherichia coli O17:K52:H18 (strain UMN026 / ExPEC).